Here is a 166-residue protein sequence, read N- to C-terminus: MFPMVTEFINYGQQTVRAARYIGQGFMITLSHANRLPVTIQYPYEKLITSERFRGRIHFEFDKCIACEVCVRVCPIDLPVVDWKLETDIRKKRLLNYSIDFGICIFCGNCVEYCPTNCLSMTEEYELSTYDRHELNYNQIALGRLPMSIIDDYTIRTILNLPEIKT.

4Fe-4S ferredoxin-type domains lie at 55–84 (GRIH…VDWK) and 95–124 (LNYS…MTEE). Residues cysteine 64, cysteine 67, cysteine 70, cysteine 74, cysteine 104, cysteine 107, cysteine 110, and cysteine 114 each contribute to the [4Fe-4S] cluster site.

The protein belongs to the complex I 23 kDa subunit family. As to quaternary structure, NDH is composed of at least 16 different subunits, 5 of which are encoded in the nucleus. The cofactor is [4Fe-4S] cluster.

Its subcellular location is the plastid. The protein resides in the chloroplast thylakoid membrane. The catalysed reaction is a plastoquinone + NADH + (n+1) H(+)(in) = a plastoquinol + NAD(+) + n H(+)(out). It carries out the reaction a plastoquinone + NADPH + (n+1) H(+)(in) = a plastoquinol + NADP(+) + n H(+)(out). Its function is as follows. NDH shuttles electrons from NAD(P)H:plastoquinone, via FMN and iron-sulfur (Fe-S) centers, to quinones in the photosynthetic chain and possibly in a chloroplast respiratory chain. The immediate electron acceptor for the enzyme in this species is believed to be plastoquinone. Couples the redox reaction to proton translocation, and thus conserves the redox energy in a proton gradient. This chain is NAD(P)H-quinone oxidoreductase subunit I, chloroplastic, found in Laphamia lindheimeri (Lindheimer's rockdaisy).